The sequence spans 821 residues: MNRGFFNMLGRRPFPAPTAMWRPRRRRQAAPMPARNGLASQIQQLTTAVSALVIGQATRPQPPRPRPPPRQKKQAPKQPPKPKKPKTQEKKKKQPAKPKPGKRQRMALKLEADRLFDVKNEDGDVIGHALAMEGKVMKPLHVKGTIDHPVLSKLKFTKSSAYDMEFAQLPVNMRSEAFTYTSEHPEGFYNWHHGAVQYSGGRFTIPRGVGGRGDSGRPIMDNSGRVVAIVLGGADEGTRTALSVVTWNSKGKTIKTTPEGTEEWSAAPLVTAMCLLGNVSFPCDRPPTCYTREPSRALDILEENVNHEAYDTLLNAILRCGSSGRSKRSVIDDFTLTSPYLGTCSYCHHTVPCFSPVKIEQVWDEADDNTIRIQTSAQFGYDQSGAASANKYRYMSLKQDHTVKEGTMDDIKISTSGPCRRLSYKGYFLLAKCPPGDSVTVSIVSSNSATSCTLARKIKPKFVGREKYDLPPVHGKKIPCTVYDRLKETTAGYITMHRPRPHAYTSYLEESSGKVYAKPPSGKNITYECKCGDYKTGTVSTRTEITGCTAIKQCVAYKSDQTKWVFNSPDLIRHDDHTAQGKLHLPFKLIPSTCMVPVAHAPNVIHGFKHISLQLDTDHLTLLTTRRLGANPEPTTEWIVGKTVRNFTVDRDGLEYIWGNHEPVRVYAQESAPGDPHGWPHEIVQHYYHRHPVYTILAVASATVAMMIGVTVAVLCACKARRECLTPYALAPNAVIPTSLALLCCVRSANAETFTETMSYLWSNSQPFFWVQLCIPLAAFIVLMRCCSCCLPFLSGCRRLPGEGRRLRTCDHCSKCATDTV.

Residues 1-106 (MNRGFFNMLG…KPKPGKRQRM (106 aa)) are disordered. The segment covering 38–49 (LASQIQQLTTAV) has biased composition (polar residues). Basic residues predominate over residues 67–106 (PPPRQKKQAPKQPPKPKKPKTQEKKKKQPAKPKPGKRQRM). A ribosome-binding region spans residues 93-101 (KQPAKPKPG). Residues 114–264 (RLFDVKNEDG…KTTPEGTEEW (151 aa)) enclose the Peptidase S3 domain. Catalysis depends on charge relay system residues H141, D163, and S215. Residues 265-279 (SAAPLVTAMCLLGNV) form a functions as an uncleaved signal peptide for the precursor of protein E3/E2 region. N278 is a glycosylation site (N-linked (GlcNAc...) asparagine; by host). A disulfide bond links C283 and C289. N-linked (GlcNAc...) asparagine; by host glycans are attached at residues N524 and N646. The helical transmembrane segment at 696 to 716 (ILAVASATVAMMIGVTVAVLC) threads the bilayer. Residues C724, C744, and C745 are each lipidated (S-palmitoyl cysteine; by host). Helical transmembrane passes span 726–746 (TPYALAPNAVIPTSLALLCCV) and 764–784 (NSQPFFWVQLCIPLAAFIVLM).

Belongs to the alphavirus frameshifted structural polyprotein family. Homomultimer. Interacts with host karyopherin KPNA4; this interaction allows the nuclear import of the viral capsid protein. Interacts with spike glycoprotein E2. Interacts with host IRAK1; the interaction leads to inhibition of IRAK1-dependent signaling. In terms of assembly, the precursor of protein E3/E2 and E1 form a heterodimer shortly after synthesis. As to quaternary structure, processing of the precursor of protein E3/E2 into E2 and E3 results in a heterodimer of the spike glycoproteins E2 and E1. Spike at virion surface are constituted of three E2-E1 heterodimers. Post-translationally, specific enzymatic cleavages in vivo yield mature proteins. Capsid protein is auto-cleaved during polyprotein translation, unmasking a signal peptide at the N-terminus of the precursor of E3/E2. The remaining polyprotein is then targeted to the host endoplasmic reticulum, where host signal peptidase cleaves it into pE2 and TF. pE2 is further processed to mature E3 and E2 by host furin in trans-Golgi vesicle. In terms of processing, palmitoylated via thioester bonds. These palmitoylations may induce disruption of the C-terminus transmembrane. This would result in the reorientation of E2 C-terminus from lumenal to cytoplasmic side. Palmitoylated via thioester bonds.

It is found in the virion. The protein resides in the host cytoplasm. The protein localises to the host cell membrane. It localises to the host nucleus. Its subcellular location is the virion membrane. It carries out the reaction Autocatalytic release of the core protein from the N-terminus of the togavirus structural polyprotein by hydrolysis of a -Trp-|-Ser- bond.. In terms of biological role, forms an icosahedral capsid with a T=4 symmetry composed of 240 copies of the capsid protein surrounded by a lipid membrane through which penetrate 80 spikes composed of trimers of E1-E2 heterodimers. The capsid protein binds to the viral RNA genome at a site adjacent to a ribosome binding site for viral genome translation following genome release. Possesses a protease activity that results in its autocatalytic cleavage from the nascent structural protein. Following its self-cleavage, the capsid protein transiently associates with ribosomes, and within several minutes the protein binds to viral RNA and rapidly assembles into icosahedric core particles. The resulting nucleocapsid eventually associates with the cytoplasmic domain of the spike glycoprotein E2 at the cell membrane, leading to budding and formation of mature virions. In case of infection, new virions attach to target cells and after clathrin-mediated endocytosis their membrane fuses with the host endosomal membrane. This leads to the release of the nucleocapsid into the cytoplasm, followed by an uncoating event necessary for the genomic RNA to become accessible. The uncoating might be triggered by the interaction of capsid proteins with ribosomes. Binding of ribosomes would release the genomic RNA since the same region is genomic RNA-binding and ribosome-binding. Specifically inhibits interleukin-1 receptor-associated kinase 1/IRAK1-dependent signaling during viral entry, representing a means by which the alphaviruses may evade innate immune detection and activation prior to viral gene expression. Provides the signal sequence for the translocation of the precursor of protein E3/E2 to the host endoplasmic reticulum. Furin-cleaved E3 remains associated with spike glycoprotein E1 and mediates pH protection of the latter during the transport via the secretory pathway. After virion release from the host cell, the assembly protein E3 is gradually released in the extracellular space. Its function is as follows. Plays an essential role in viral attachment to target host cell, by binding to the cell receptor. Synthesized as a pE2 precursor which is processed by furin at the cell membrane just before virion budding, giving rise to E2-E1 heterodimer. The pE2-E1 heterodimer is stable, whereas E2-E1 is unstable and dissociate at low pH. pE2 is processed at the last step, presumably to avoid E1 fusion activation before its final export to cell surface. E2 C-terminus contains a transitory transmembrane that would be disrupted by palmitoylation, resulting in reorientation of the C-terminal tail from lumenal to cytoplasmic side. This step is critical since E2 C-terminus is involved in budding by interacting with capsid proteins. This release of E2 C-terminus in cytoplasm occurs lately in protein export, and precludes premature assembly of particles at the endoplasmic reticulum membrane. Functionally, plays a role in viral assembly and release. This is Frameshifted structural polyprotein from Sindbis virus (SINV).